The primary structure comprises 977 residues: Structural protein ORF43 (977 aa).

The tract at residues 531–556 (DNDNINKQQQQQRERNDDDDDDDDST) is disordered.

This sequence belongs to the ascovirus HvAV ORF146 family.

It localises to the virion. This is Structural protein ORF43 from Noctuidae (owlet moths).